A 357-amino-acid chain; its full sequence is Probable cinnamyl alcohol dehydrogenase (357 aa).

Position 47 (Cys47) interacts with Zn(2+). Ser49 serves as a coordination point for NADP(+). Zn(2+) contacts are provided by His69, Glu70, Cys100, Cys103, Cys106, Cys114, and Cys163. NADP(+) contacts are provided by residues Thr167, 188–193, 211–216, Thr251, Gly275, and 298–300; these read GLGGVG, SSSDKK, and SFI.

It belongs to the zinc-containing alcohol dehydrogenase family. In terms of assembly, homodimer. It depends on Zn(2+) as a cofactor.

It carries out the reaction (E)-cinnamyl alcohol + NADP(+) = (E)-cinnamaldehyde + NADPH + H(+). The enzyme catalyses (E)-coniferol + NADP(+) = (E)-coniferaldehyde + NADPH + H(+). It catalyses the reaction (E)-sinapyl alcohol + NADP(+) = (E)-sinapaldehyde + NADPH + H(+). The catalysed reaction is (E)-4-coumaroyl alcohol + NADP(+) = (E)-4-coumaraldehyde + NADPH + H(+). It carries out the reaction (E)-caffeyl alcohol + NADP(+) = (E)-caffeyl aldehyde + NADPH + H(+). The protein operates within aromatic compound metabolism; phenylpropanoid biosynthesis. Its function is as follows. Involved in lignin biosynthesis. Catalyzes the final step specific for the production of lignin monomers. Catalyzes the NADPH-dependent reduction of coniferaldehyde, 5-hydroxyconiferaldehyde, sinapaldehyde, 4-coumaraldehyde and caffeyl aldehyde to their respective alcohols. This is Probable cinnamyl alcohol dehydrogenase from Pinus taeda (Loblolly pine).